We begin with the raw amino-acid sequence, 382 residues long: MQRLDALLPTLRERAQETEDLRRIPDDSMKALQETGFFRLLQPEQWGGYQADPVLFYSAVRKIASACGSTGWVSSIIGVHNWHLALFSQQAQEDVWGNDTDVRISSSYAPMGAGQVVDGGYTVNGAWAWSSGCDHASWAVLGGPVIKDGRPVDFVSFLIPREDYRIDDVWNVVGLRGTGSNTVVVEDVFVPTHRVLSFKAMSNLTAPGLERNTAPVYKMPWGTIHPTTISAPIVGMAYGAYDAHVEHQGKRVRAAFAGEKAKDDPFAKVRIAEASSDIDAAWRQLSGNVADEYALLVAGEEVPFELRLRARRDQVRATGRAISSIDKLFESSGATALANGTPLQRFWRDAHAGRVHAANDPERAYVMYGTGEFGLPITDTMV.

Residues tryptophan 72, serine 106–tyrosine 108, tryptophan 129–serine 131, arginine 251, alanine 334–threonine 335, and histidine 356–alanine 357 contribute to the FMN site.

The protein belongs to the HpaH/HsaA monooxygenase family. Homotetramer. HsaAB monooxygenase consists of an oxygenase component HsaA and a reductase component HsaB.

It carries out the reaction 3-hydroxy-9,10-secoandrosta-1,3,5(10)-triene-9,17-dione + FMNH2 + O2 = 3,4-dihydroxy-9,10-secoandrosta-1,3,5(10)-triene-9,17-dione + FMN + H2O + H(+). It participates in lipid metabolism; steroid biosynthesis. In terms of biological role, catalyzes the o-hydroxylation of 3-hydroxy-9,10-secoandrosta-1,3,5(10)-triene-9,17-dione (3-HSA) to 3,4-dihydroxy-9,10-secoandrosta-1,3,5(10)-triene-9,17-dione (3,4-DHSA) in the catabolism of cholesterol. In Rhodococcus jostii (strain RHA1), this protein is Flavin-dependent monooxygenase, oxygenase subunit HsaA (hsaA).